The chain runs to 287 residues: uncharacterized protein (287 aa).

2 helical membrane-spanning segments follow: residues 12–32 (IILLFGMLVFLVLLGLGGAAL) and 217–237 (YTIGAITLVSVSGGVLAVLIV).

Its subcellular location is the cell membrane. This is an uncharacterized protein from Mycoplasma pneumoniae (strain ATCC 29342 / M129 / Subtype 1) (Mycoplasmoides pneumoniae).